An 815-amino-acid polypeptide reads, in one-letter code: (E)-gamma-bisabolene synthase (815 aa).

Mg(2+)-binding residues include Asp-561, Asp-565, Asp-709, and Glu-717. Residues 561 to 565 carry the DDXXD motif motif; it reads DDMYD.

The protein belongs to the terpene synthase family. Tpsd subfamily. Mg(2+) serves as cofactor. The cofactor is Mn(2+).

The protein resides in the cytoplasm. The enzyme catalyses (2E,6E)-farnesyl diphosphate = (E)-gamma-bisabolene + diphosphate. Its pathway is terpene metabolism; oleoresin biosynthesis. Its function is as follows. Involved in defensive oleoresin formation in conifers in response to insect attack or other injury. Involved in sesquiterpene (C15) olefins biosynthesis. Produces mainly (E)-gamma-bisabolene when used with farnesyl diphosphate as substrate. No activity with geranyl diphosphate or geranylgeranyl diphosphate. The polypeptide is (E)-gamma-bisabolene synthase (TPS3) (Pseudotsuga menziesii (Douglas-fir)).